The sequence spans 192 residues: Ribosome maturation factor RimP (192 aa).

Belongs to the RimP family.

The protein resides in the cytoplasm. Required for maturation of 30S ribosomal subunits. The sequence is that of Ribosome maturation factor RimP from Delftia acidovorans (strain DSM 14801 / SPH-1).